The primary structure comprises 351 residues: AA9 family lytic polysaccharide monooxygenase A (351 aa).

Histidine 1 contributes to the Cu(2+) binding site. The cysteines at positions 52 and 178 are disulfide-linked. Asparagine 53 is a glycosylation site (N-linked (GlcNAc...) asparagine). Position 86 (histidine 86) interacts with Cu(2+). Asparagine 138 carries an N-linked (GlcNAc...) asparagine glycan. Residues histidine 164 and glutamine 173 each contribute to the O2 site. Residue tyrosine 175 participates in Cu(2+) binding. Serine 280 carries GPI-anchor amidated serine lipidation. The propeptide at 281–351 (SAIGTSTASS…RSGTLGRLSF (71 aa)) is removed in mature form.

It belongs to the polysaccharide monooxygenase AA9 family. It depends on Cu(2+) as a cofactor.

The protein resides in the cell membrane. The enzyme catalyses [(1-&gt;4)-beta-D-glucosyl]n+m + reduced acceptor + O2 = 4-dehydro-beta-D-glucosyl-[(1-&gt;4)-beta-D-glucosyl]n-1 + [(1-&gt;4)-beta-D-glucosyl]m + acceptor + H2O.. Functionally, lytic polysaccharide monooxygenase (LPMO) that depolymerizes crystalline and amorphous polysaccharides via the oxidation of scissile alpha- or beta-(1-4)-glycosidic bonds, yielding C1 or C4 oxidation products. Catalysis by LPMOs requires the reduction of the active-site copper from Cu(II) to Cu(I) by a reducing agent and H(2)O(2) or O(2) as a cosubstrate. Its function is as follows. Has broad specificity, cleaving at any position along the beta-glucan backbone of xyloglucan, regardless of substitutions. Shows minor activity on glucomannan. This chain is AA9 family lytic polysaccharide monooxygenase A, found in Gloeophyllum trabeum (Brown rot fungus).